A 444-amino-acid polypeptide reads, in one-letter code: Sprouty-related, EVH1 domain-containing protein 1 (444 aa).

Ser-2 carries the post-translational modification N-acetylserine. Residues 6 to 123 form the WH1 domain; the sequence is ATSDNDNSYA…RGIRRAIEDI (118 aa). The tract at residues 123-151 is disordered; the sequence is ISQGCPESKNEAEGADDLQANEEDSSSSL. Residues 135–147 are compositionally biased toward acidic residues; it reads EGADDLQANEEDS. Lys-224 carries the post-translational modification N6-methyllysine. The region spanning 233–285 is the KBD domain; it reads SIRHVSFQDEDEIVRINPRDILIRRYADYRHPDMWKNDLERDDADSSIQFSKP. A phosphoserine mark is found at Ser-238 and Ser-308. Positions 333 to 444 are required for interaction with TESK1; that stretch reads SRCVYCQERF…CCGGKHKAAG (112 aa). Residues 334–442 enclose the SPR domain; the sequence is RCVYCQERFN…CGCCGGKHKA (109 aa).

Homodimer and heterodimer. Able to interact with SPRED2 to form heterodimers. Interacts (via C-terminus) with TAOK1/MARKK (via C-terminus); the interaction does not affect TAOK1 kinase activity. Interacts (via C-terminus) with TESK1 (via C-terminus); the interaction inhibits TESK1 kinase activity. Interacts with CAV1. Interacts with RAS. Interacts with palmitoyltransferase ZDHHC17/HIP14; the interaction leads to palmitoylation of SPRED1. Post-translationally, palmitoylated by ZDHHC17/HIP14. In terms of processing, phosphorylated on tyrosine. Ubiquitinated. In terms of tissue distribution, weakly expressed in embryonic cell line HEK293.

Its subcellular location is the cell membrane. The protein resides in the membrane. It localises to the caveola. It is found in the nucleus. In terms of biological role, tyrosine kinase substrate that inhibits growth-factor-mediated activation of MAP kinase. Negatively regulates hematopoiesis of bone marrow. Inhibits fibroblast growth factor (FGF)-induced retinal lens fiber differentiation, probably by inhibiting FGF-mediated phosphorylation of ERK1/2. Attenuates actin stress fiber formation via inhibition of TESK1-mediated phosphorylation of cofilin. Inhibits TGFB-induced epithelial-to-mesenchymal transition in lens epithelial cells. This is Sprouty-related, EVH1 domain-containing protein 1 (SPRED1) from Homo sapiens (Human).